Consider the following 168-residue polypeptide: Crossover junction endodeoxyribonuclease RuvC (168 aa).

Active-site residues include D8, E68, and D140. D8, E68, and D140 together coordinate Mg(2+).

The protein belongs to the RuvC family. Homodimer which binds Holliday junction (HJ) DNA. The HJ becomes 2-fold symmetrical on binding to RuvC with unstacked arms; it has a different conformation from HJ DNA in complex with RuvA. In the full resolvosome a probable DNA-RuvA(4)-RuvB(12)-RuvC(2) complex forms which resolves the HJ. It depends on Mg(2+) as a cofactor.

It is found in the cytoplasm. It catalyses the reaction Endonucleolytic cleavage at a junction such as a reciprocal single-stranded crossover between two homologous DNA duplexes (Holliday junction).. Functionally, the RuvA-RuvB-RuvC complex processes Holliday junction (HJ) DNA during genetic recombination and DNA repair. Endonuclease that resolves HJ intermediates. Cleaves cruciform DNA by making single-stranded nicks across the HJ at symmetrical positions within the homologous arms, yielding a 5'-phosphate and a 3'-hydroxyl group; requires a central core of homology in the junction. The consensus cleavage sequence is 5'-(A/T)TT(C/G)-3'. Cleavage occurs on the 3'-side of the TT dinucleotide at the point of strand exchange. HJ branch migration catalyzed by RuvA-RuvB allows RuvC to scan DNA until it finds its consensus sequence, where it cleaves and resolves the cruciform DNA. This Gluconobacter oxydans (strain 621H) (Gluconobacter suboxydans) protein is Crossover junction endodeoxyribonuclease RuvC.